The chain runs to 196 residues: CAG pathogenicity island protein 13 (196 aa).

This is CAG pathogenicity island protein 13 (cagS) from Helicobacter pylori (strain ATCC 700392 / 26695) (Campylobacter pylori).